Reading from the N-terminus, the 445-residue chain is Bifunctional protein GlmU (445 aa).

Residues 1–218 are pyrophosphorylase; the sequence is MRALVLAAGK…LLEITGVNTR (218 aa). UDP-N-acetyl-alpha-D-glucosamine-binding positions include 6–9, lysine 20, glutamine 69, 74–75, 96–98, glycine 134, glutamate 147, asparagine 162, and asparagine 216; these read LAAG, GT, and YGD. Mg(2+) is bound at residue aspartate 98. Residue asparagine 216 coordinates Mg(2+). The tract at residues 219–239 is linker; the sequence is KTLVWLEEQLRMRKIEELLEN. Residues 240–445 form an N-acetyltransferase region; sequence GVTILDPATT…GWVLKKRKEE (206 aa). Arginine 321 and lysine 339 together coordinate UDP-N-acetyl-alpha-D-glucosamine. Histidine 351 functions as the Proton acceptor in the catalytic mechanism. 2 residues coordinate UDP-N-acetyl-alpha-D-glucosamine: tyrosine 354 and asparagine 365. Acetyl-CoA is bound by residues alanine 368, 374 to 375, serine 393, alanine 411, and arginine 428; that span reads NY.

This sequence in the N-terminal section; belongs to the N-acetylglucosamine-1-phosphate uridyltransferase family. It in the C-terminal section; belongs to the transferase hexapeptide repeat family. In terms of assembly, homotrimer. Mg(2+) serves as cofactor.

The protein localises to the cytoplasm. The catalysed reaction is alpha-D-glucosamine 1-phosphate + acetyl-CoA = N-acetyl-alpha-D-glucosamine 1-phosphate + CoA + H(+). It catalyses the reaction N-acetyl-alpha-D-glucosamine 1-phosphate + UTP + H(+) = UDP-N-acetyl-alpha-D-glucosamine + diphosphate. The protein operates within nucleotide-sugar biosynthesis; UDP-N-acetyl-alpha-D-glucosamine biosynthesis; N-acetyl-alpha-D-glucosamine 1-phosphate from alpha-D-glucosamine 6-phosphate (route II): step 2/2. It functions in the pathway nucleotide-sugar biosynthesis; UDP-N-acetyl-alpha-D-glucosamine biosynthesis; UDP-N-acetyl-alpha-D-glucosamine from N-acetyl-alpha-D-glucosamine 1-phosphate: step 1/1. Its pathway is bacterial outer membrane biogenesis; LPS lipid A biosynthesis. Catalyzes the last two sequential reactions in the de novo biosynthetic pathway for UDP-N-acetylglucosamine (UDP-GlcNAc). The C-terminal domain catalyzes the transfer of acetyl group from acetyl coenzyme A to glucosamine-1-phosphate (GlcN-1-P) to produce N-acetylglucosamine-1-phosphate (GlcNAc-1-P), which is converted into UDP-GlcNAc by the transfer of uridine 5-monophosphate (from uridine 5-triphosphate), a reaction catalyzed by the N-terminal domain. The polypeptide is Bifunctional protein GlmU (Thermotoga maritima (strain ATCC 43589 / DSM 3109 / JCM 10099 / NBRC 100826 / MSB8)).